The chain runs to 263 residues: uncharacterized protein (263 aa).

Helical transmembrane passes span 1-21 (MLVIVLQGLAGFLSIIAILCQ), 38-58 (LFLLDFVGNGLYLYCALHYCY), 82-102 (IPISSFLILKDFCVSCCCMMV), 118-138 (GISITSIIIISVFLVLGIFTY), 151-171 (GKFGVFYLEHINYLWVMANLL), 196-216 (FALISFLAESIDLLGRLVIPT), and 230-250 (FWVKLIQFVTLLVILCQVQYV).

Its subcellular location is the membrane. This is an uncharacterized protein from Saccharomyces cerevisiae (strain ATCC 204508 / S288c) (Baker's yeast).